Here is a 355-residue protein sequence, read N- to C-terminus: Phospho-N-acetylmuramoyl-pentapeptide-transferase (355 aa).

The next 10 helical transmembrane spans lie at 3–23, 56–76, 80–100, 120–140, 156–176, 185–205, 224–244, 251–271, 276–296, and 330–350; these read GVLI…PWVI, VIIV…GIGF, GLLV…DDYI, AAVA…AGLL, VGII…SNAV, LAAG…FWQF, PLDV…FLWW, IFMG…IAIV, LLLV…MIQV, and FWIV…AEFL.

The protein belongs to the glycosyltransferase 4 family. MraY subfamily. Mg(2+) is required as a cofactor.

Its subcellular location is the cell membrane. It carries out the reaction UDP-N-acetyl-alpha-D-muramoyl-L-alanyl-gamma-D-glutamyl-meso-2,6-diaminopimeloyl-D-alanyl-D-alanine + di-trans,octa-cis-undecaprenyl phosphate = di-trans,octa-cis-undecaprenyl diphospho-N-acetyl-alpha-D-muramoyl-L-alanyl-D-glutamyl-meso-2,6-diaminopimeloyl-D-alanyl-D-alanine + UMP. Its pathway is cell wall biogenesis; peptidoglycan biosynthesis. Functionally, catalyzes the initial step of the lipid cycle reactions in the biosynthesis of the cell wall peptidoglycan: transfers peptidoglycan precursor phospho-MurNAc-pentapeptide from UDP-MurNAc-pentapeptide onto the lipid carrier undecaprenyl phosphate, yielding undecaprenyl-pyrophosphoryl-MurNAc-pentapeptide, known as lipid I. In Frankia casuarinae (strain DSM 45818 / CECT 9043 / HFP020203 / CcI3), this protein is Phospho-N-acetylmuramoyl-pentapeptide-transferase.